Consider the following 561-residue polypeptide: DNA ligase B (561 aa).

The N6-AMP-lysine intermediate role is filled by lysine 125.

This sequence belongs to the NAD-dependent DNA ligase family. LigB subfamily.

It catalyses the reaction NAD(+) + (deoxyribonucleotide)n-3'-hydroxyl + 5'-phospho-(deoxyribonucleotide)m = (deoxyribonucleotide)n+m + AMP + beta-nicotinamide D-nucleotide.. Functionally, catalyzes the formation of phosphodiester linkages between 5'-phosphoryl and 3'-hydroxyl groups in double-stranded DNA using NAD as a coenzyme and as the energy source for the reaction. This is DNA ligase B from Salmonella newport (strain SL254).